A 377-amino-acid chain; its full sequence is Glycine oxidase (377 aa).

FAD-binding positions include 14–15 (VI), 34–35 (EK), 42–43 (AS), 47–49 (AGM), and V180. Positions 309 and 336 each coordinate substrate. 334 to 340 (HYRNGIL) lines the FAD pocket.

This sequence belongs to the DAO family. ThiO subfamily. As to quaternary structure, homotetramer. It depends on FAD as a cofactor.

The catalysed reaction is glycine + O2 + H2O = glyoxylate + H2O2 + NH4(+). It catalyses the reaction N-ethylglycine + O2 + H2O = ethylamine + glyoxylate + H2O2. It carries out the reaction sarcosine + O2 + H2O = methylamine + glyoxylate + H2O2. The enzyme catalyses D-alanine + O2 + H2O = pyruvate + H2O2 + NH4(+). It participates in cofactor biosynthesis; thiamine diphosphate biosynthesis. With respect to regulation, is inhibited at high substrate concentration. Its function is as follows. Catalyzes the FAD-dependent oxidative deamination of various amines and D-amino acids to yield the corresponding alpha-keto acids, ammonia/amine, and hydrogen peroxide. Oxidizes glycine, sarcosine (N-methylglycine), N-ethylglycine, D-proline, D-alanine, glycine-ethyl ester, and some other D-amino acids. Does not act on L-proline. Is essential for thiamine biosynthesis since the oxidation of glycine catalyzed by ThiO generates the glycine imine intermediate (dehydroglycine) required for the biosynthesis of the thiazole ring of thiamine pyrophosphate. The sequence is that of Glycine oxidase from Geobacillus kaustophilus (strain HTA426).